The following is a 1227-amino-acid chain: Anion exchange protein 3 (1227 aa).

Positions 1–11 are enriched in pro residues; sequence MANGVIPPPGG. Disordered regions lie at residues 1-256, 286-312, and 428-497; these read MANG…DEAE, KPSR…KKKK, and NDDK…GDGH. Topologically, residues 1–707 are cytoplasmic; the sequence is MANGVIPPPG…DLRDALHSQC (707 aa). Over residues 58–75 the composition is skewed to basic and acidic residues; it reads DPEKPSRSYSERDFEFHR. 2 stretches are compositionally biased toward basic residues: residues 76 to 97 and 104 to 113; these read HTSH…KLRR and RHTRRKRKKE. The span at 134-152 shows a compositional bias: acidic residues; it reads AEEEEEEEEEEEGESEAEP. Phosphoserine is present on residues Ser-167, Ser-170, Ser-175, and Ser-198. A compositionally biased stretch (low complexity) spans 194-215; that stretch reads QSDQSPQRSGSSPSPRARASRI. Arg-294 is modified (omega-N-methylarginine). Over residues 435-448 the composition is skewed to low complexity; it reads FFPRNPSSSSVNSV. Over residues 480 to 497 the composition is skewed to basic and acidic residues; it reads HDPDAKEKPLHMPGGDGH. Transmembrane regions (helical) follow at residues 708-730, 736-773, 793-815, and 825-846; these read VAAV…GLLG, LMGV…LLVF, VWVG…SFLV, and IFAF…YKVF. The tract at residues 708–1227 is membrane (anion exchange); that stretch reads VAAVLFIYFA…DEYNELHMPV (520 aa). Asn-868 carries N-linked (GlcNAc...) asparagine glycosylation. A helical transmembrane segment spans residues 888–905; that stretch reads ALLSLILMLGTFLIAFFL. Over 906-920 the chain is Cytoplasmic; it reads RKFRNSRFLGGKARR. 5 helical membrane passes run 921–941, 975–997, 1023–1044, 1078–1123, and 1150–1186; these read IIGD…DYSI, PFPP…LIFM, LLLI…LTAA, VTGV…IQLS, and MHLF…TVPL. The S-palmitoyl cysteine moiety is linked to residue Cys-1160.

Belongs to the anion exchanger (TC 2.A.31) family. Expressed in the brain.

It localises to the cell membrane. It carries out the reaction hydrogencarbonate(in) + chloride(out) = hydrogencarbonate(out) + chloride(in). Inhibited by 4,4'-diisothiocyanatostilbene-2,2'-disulfonic acid (DIDS). In terms of biological role, sodium-independent anion exchanger which mediates the electroneutral exchange of chloride for bicarbonate ions across the cell membrane. May be involved in the regulation of intracellular pH, and the modulation of cardiac action potential. The protein is Anion exchange protein 3 (Slc4a3) of Mus musculus (Mouse).